Reading from the N-terminus, the 143-residue chain is 3-dehydroquinate dehydratase (143 aa).

Tyrosine 22 serves as the catalytic Proton acceptor. Residues asparagine 73, histidine 79, and aspartate 86 each coordinate substrate. The Proton donor role is filled by histidine 99. Substrate-binding positions include 100-101 and arginine 110; that span reads IS.

Belongs to the type-II 3-dehydroquinase family. As to quaternary structure, homododecamer.

The enzyme catalyses 3-dehydroquinate = 3-dehydroshikimate + H2O. It functions in the pathway metabolic intermediate biosynthesis; chorismate biosynthesis; chorismate from D-erythrose 4-phosphate and phosphoenolpyruvate: step 3/7. Catalyzes a trans-dehydration via an enolate intermediate. The chain is 3-dehydroquinate dehydratase from Mycobacterium avium (strain 104).